The following is a 648-amino-acid chain: A-type voltage-gated potassium channel KCND1 (648 aa).

At 1–183 the chain is on the cytoplasmic side; sequence MAAGVATWLP…RAFENPHTST (183 aa). Residues 2–20 form an interaction with KCNIP1, KCNIP2, and other family members region; that stretch reads AAGVATWLPFARAAAVGWL. The interaction with KCNIP2 stretch occupies residues 2–20; it reads AAGVATWLPFARAAAVGWL. Positions 104, 131, and 132 each coordinate Zn(2+). The tract at residues 144–164 is disordered; it reads AERLAEDEEAEQAGDGPTLPA. A helical transmembrane segment spans residues 184–205; sequence AALVFYYVTGFFIAVSVIANVV. Residues 206-230 lie on the Extracellular side of the membrane; it reads ETIPCRSPTRRPPREQPCGDRFPLA. A helical transmembrane segment spans residues 231–252; sequence FFCMDTACVLIFTGEYLLRLFA. Residues 253-263 lie on the Cytoplasmic side of the membrane; the sequence is APSRCRFLRSV. Residues 264–284 traverse the membrane as a helical segment; that stretch reads MSLIDVVAILPYYIGLFMPKN. Residues 285-287 are Extracellular-facing; it reads EDV. A helical; Voltage-sensor membrane pass occupies residues 288-308; it reads SGAFVTLRVFRVFRIFKFSRH. Over 309 to 323 the chain is Cytoplasmic; the sequence is SQGLRILGYTLKSCA. Residues 310–323 are S4-S5 linker; the sequence is QGLRILGYTLKSCA. The helical transmembrane segment at 324-345 threads the bilayer; sequence SELGFLLFSLTMAIIIFATVMF. The Extracellular segment spans residues 346 to 359; the sequence is YAEKGTNKTNFTSI. N-linked (GlcNAc...) asparagine glycans are attached at residues Asn352 and Asn355. The helical intramembrane region spans 360–371; the sequence is PAAFWYTIVTMT. Residues 372-377 carry the Selectivity filter motif; that stretch reads TLGYGD. The stretch at 372 to 379 is an intramembrane region; it reads TLGYGDMV. Residues 380-386 are Extracellular-facing; the sequence is PSTIAGK. Residues 387-415 form a helical membrane-spanning segment; it reads IFGSICSLSGVLVIALPVPVIVSNFSRIY. Over 416–648 the chain is Cytoplasmic; sequence HQNQRADKRR…LPETVKISSL (233 aa). At Ser458 the chain carries Phosphoserine. The mediates dendritic targeting stretch occupies residues 474-489; that stretch reads FEQQHHHLLHCLEKTT. The segment at 474-489 is required for dendritic targeting; it reads FEQQHHHLLHCLEKTT. Ser555 is modified (phosphoserine). Positions 601-636 are disordered; that stretch reads IPTPPANTPDESQPSSPGGGGGGASSTLRNSSLGTP.

The protein belongs to the potassium channel family. D (Shal) (TC 1.A.1.2) subfamily. Kv4.1/KCND1 sub-subfamily. As to quaternary structure, component of heteromultimeric potassium channels. Identified in potassium channel complexes containing KCND1, KCND2, KCND3, KCNIP1, KCNIP2, KCNIP3, KCNIP4, DPP6 and DPP10.

It localises to the cell membrane. The catalysed reaction is K(+)(in) = K(+)(out). A-type voltage-gated potassium channel that mediates transmembrane potassium transport in excitable membranes in the brain. Mediates A-type current I(SA) in suprachiasmatic nucleus (SCN) neurons. Exhibits a low-threshold A-type current with a hyperpolarized steady-state inactivation midpoint and the recovery process was steeply voltage-dependent, with recovery being markedly faster at more negative potentials. May regulates repetitive firing rates in the suprachiasmatic nucleus (SCN) neurons and circadian rhythms in neuronal excitability and behavior. Contributes to the regulation of the circadian rhythm of action potential firing in suprachiasmatic nucleus neurons, which regulates the circadian rhythm of locomotor activity. The regulatory subunit KCNIP1 modulates the kinetics of channel inactivation, increases the current amplitudes and accelerates recovery from inactivation, shifts activation in a depolarizing direction. The regulatory subunit DPP10 decreases the voltage sensitivity of the inactivation channel gating. This Bos taurus (Bovine) protein is A-type voltage-gated potassium channel KCND1.